Consider the following 358-residue polypeptide: Protein-glutamate methylesterase/protein-glutamine glutaminase 3 (358 aa).

Residues 2–118 (KILVVDDSAL…CGRLQEVAPL (117 aa)) enclose the Response regulatory domain. A 4-aspartylphosphate modification is found at D52. The CheB-type methylesterase domain maps to 155–325 (NNEDHQLAIM…VPSMPEALLK (171 aa)). Active-site residues include S167, H194, and D291.

The protein belongs to the CheB family. Phosphorylated by CheA. Phosphorylation of the N-terminal regulatory domain activates the methylesterase activity.

It localises to the cytoplasm. It carries out the reaction [protein]-L-glutamate 5-O-methyl ester + H2O = L-glutamyl-[protein] + methanol + H(+). The catalysed reaction is L-glutaminyl-[protein] + H2O = L-glutamyl-[protein] + NH4(+). Functionally, involved in chemotaxis. Part of a chemotaxis signal transduction system that modulates chemotaxis in response to various stimuli. Catalyzes the demethylation of specific methylglutamate residues introduced into the chemoreceptors (methyl-accepting chemotaxis proteins or MCP) by CheR. Also mediates the irreversible deamidation of specific glutamine residues to glutamic acid. The sequence is that of Protein-glutamate methylesterase/protein-glutamine glutaminase 3 from Vibrio cholerae serotype O1 (strain ATCC 39315 / El Tor Inaba N16961).